Reading from the N-terminus, the 185-residue chain is Pyruvate/ketoisovalerate oxidoreductases common subunit gamma (185 aa).

As to quaternary structure, heterotetramer of one alpha, one beta, one delta and one gamma chain.

The enzyme catalyses 2 oxidized [2Fe-2S]-[ferredoxin] + pyruvate + CoA = 2 reduced [2Fe-2S]-[ferredoxin] + acetyl-CoA + CO2 + H(+). It carries out the reaction 3-methyl-2-oxobutanoate + 2 oxidized [2Fe-2S]-[ferredoxin] + CoA = 2-methylpropanoyl-CoA + 2 reduced [2Fe-2S]-[ferredoxin] + CO2 + H(+). The protein is Pyruvate/ketoisovalerate oxidoreductases common subunit gamma (porG) of Pyrococcus abyssi (strain GE5 / Orsay).